Reading from the N-terminus, the 291-residue chain is Probable alpha-L-glutamate ligase (291 aa).

Residues 104–287 (HQLLASQGID…VAGTIIQHLE (184 aa)) form the ATP-grasp domain. Residues lysine 141, 178–179 (EF), aspartate 187, and 211–213 (RSN) each bind ATP. Residues aspartate 248, glutamate 260, and asparagine 262 each contribute to the Mg(2+) site. The Mn(2+) site is built by aspartate 248, glutamate 260, and asparagine 262.

This sequence belongs to the RimK family. Mg(2+) is required as a cofactor. It depends on Mn(2+) as a cofactor.

This chain is Probable alpha-L-glutamate ligase, found in Xanthomonas campestris pv. campestris (strain 8004).